Here is a 69-residue protein sequence, read N- to C-terminus: U-scoloptoxin(21)-Sm2a (69 aa).

A signal peptide spans 1–21; the sequence is MFFLGFIIVCASEEQSDNRLP. Residues 46-69 form a disordered region; it reads ANDPNGPGRRRRSPIVREEILRHP. Residues 60–69 show a composition bias toward basic and acidic residues; that stretch reads IVREEILRHP.

It belongs to the scoloptoxin-21 family. In terms of tissue distribution, expressed by the venom gland.

It is found in the secreted. The sequence is that of U-scoloptoxin(21)-Sm2a from Scolopendra morsitans (Tanzanian blue ringleg centipede).